The primary structure comprises 432 residues: Mannan endo-1,4-beta-mannosidase 1 (432 aa).

The signal sequence occupies residues 1–28 (MRLLGAHRAALLVLACVVVVVIHGLGEA). Substrate is bound by residues W93 and N209. E210 serves as the catalytic Proton donor. Position 289 (Y289) interacts with substrate. The active-site Nucleophile is the E329. W371 serves as a coordination point for substrate.

This sequence belongs to the glycosyl hydrolase 5 (cellulase A) family. In terms of tissue distribution, ubiquitous.

The protein localises to the secreted. The enzyme catalyses Random hydrolysis of (1-&gt;4)-beta-D-mannosidic linkages in mannans, galactomannans and glucomannans.. This is Mannan endo-1,4-beta-mannosidase 1 (MAN1) from Oryza sativa subsp. japonica (Rice).